We begin with the raw amino-acid sequence, 191 residues long: Lipid A acyltransferase PagP (191 aa).

An N-terminal signal peptide occupies residues M1 to A23. Catalysis depends on residues H62, D105, and S106.

Belongs to the lipid A palmitoyltransferase family. As to quaternary structure, homodimer.

It is found in the cell outer membrane. The enzyme catalyses a lipid A + a 1,2-diacyl-sn-glycero-3-phosphocholine = a hepta-acyl lipid A + a 2-acyl-sn-glycero-3-phosphocholine. It carries out the reaction a lipid IVA + a 1,2-diacyl-sn-glycero-3-phosphocholine = a lipid IVB + a 2-acyl-sn-glycero-3-phosphocholine. It catalyses the reaction a lipid IIA + a 1,2-diacyl-sn-glycero-3-phosphocholine = a lipid IIB + a 2-acyl-sn-glycero-3-phosphocholine. Transfers a fatty acid residue from the sn-1 position of a phospholipid to the N-linked hydroxyfatty acid chain on the proximal unit of lipid A or its precursors. The polypeptide is Lipid A acyltransferase PagP (Sodalis glossinidius (strain morsitans)).